A 722-amino-acid polypeptide reads, in one-letter code: Polyribonucleotide nucleotidyltransferase (722 aa).

The Mg(2+) site is built by Asp-487 and Asp-493. The KH domain occupies 554–613; that stretch reads PRIETFKIPTDKIREVIGTGGKVIREIVEKTGAKVNIEDDGTVKVASSDGESIKAAIKWI. The S1 motif domain maps to 623 to 691; sequence GEIYEGTVVK…DRGKTRLSMK (69 aa). The segment at 691 to 722 is disordered; that stretch reads KVVDQDTGEDLEAKQKAEAKAEDEAPAQAAGE. Positions 701-713 are enriched in basic and acidic residues; sequence LEAKQKAEAKAED.

Belongs to the polyribonucleotide nucleotidyltransferase family. Requires Mg(2+) as cofactor.

It localises to the cytoplasm. It catalyses the reaction RNA(n+1) + phosphate = RNA(n) + a ribonucleoside 5'-diphosphate. Its function is as follows. Involved in mRNA degradation. Catalyzes the phosphorolysis of single-stranded polyribonucleotides processively in the 3'- to 5'-direction. The sequence is that of Polyribonucleotide nucleotidyltransferase from Rhodopseudomonas palustris (strain BisB5).